The primary structure comprises 116 residues: Venom protein 54.1 (116 aa).

Positions 1–19 are cleaved as a signal peptide; sequence MNFQVFSLIFFNFVYYCSC.

In terms of processing, contains 3 disulfide bonds. In terms of tissue distribution, expressed by the venom gland.

It is found in the secreted. This Lychas mucronatus (Chinese swimming scorpion) protein is Venom protein 54.1.